The chain runs to 50 residues: Small ribosomal subunit protein uS14 (50 aa).

Zn(2+) is bound by residues cysteine 15, cysteine 18, cysteine 33, and cysteine 36.

It belongs to the universal ribosomal protein uS14 family. Zinc-binding uS14 subfamily. As to quaternary structure, part of the 30S ribosomal subunit. Requires Zn(2+) as cofactor.

Functionally, binds 16S rRNA, required for the assembly of 30S particles. The sequence is that of Small ribosomal subunit protein uS14 from Methanothermobacter thermautotrophicus (strain ATCC 29096 / DSM 1053 / JCM 10044 / NBRC 100330 / Delta H) (Methanobacterium thermoautotrophicum).